The following is a 548-amino-acid chain: (S)-beta-macrocarpene synthase (548 aa).

Mg(2+) contacts are provided by Asp302 and Asp306. Residues Asp302, Asp306, Arg443, and Asn446 each contribute to the substrate site. A DDXXD motif motif is present at residues 302–306 (DDTLD). Mg(2+)-binding residues include Asn446, Ser450, and Glu454.

Belongs to the terpene synthase family. Monomer. Mg(2+) is required as a cofactor. It depends on Mn(2+) as a cofactor. As to expression, expressed in roots. Not detected in leaves, unless damaged by herbivory or infected by fungi.

It localises to the cytoplasm. It catalyses the reaction (S)-beta-bisabolene = (S)-beta-macrocarpene. It carries out the reaction (2E,6E)-farnesyl diphosphate = (S)-beta-bisabolene + diphosphate. The enzyme catalyses (2E)-geranyl diphosphate = (4S)-limonene + diphosphate. The catalysed reaction is (2E)-geranyl diphosphate = beta-myrcene + diphosphate. It catalyses the reaction (2E)-geranyl diphosphate = terpinolene + diphosphate. It carries out the reaction (2E)-geranyl diphosphate + H2O = (S)-linalool + diphosphate. It participates in secondary metabolite biosynthesis; terpenoid biosynthesis. Functionally, involved in the biosynthesis of the bicyclic sesquiterpene (S)-beta-macrocarpene. Can use both geranyl diphosphate and farnesyl diphosphate as substrate, but not geranylgeranyl diphosphate. Produces mainly (S)-beta-macrocarpene, but also smaller amounts of beta-bisabolene and (E)-beta-farnesene when used with farnesyl diphosphate as substrate. In the presence of geranyl diphosphate, produces the acyclic monoterpenes beta-myrcene and linalool along with minor amounts of the cyclic compounds limonene, alpha-thujene, sabinene and alpha-terpinolene. May be involved in plant defense. The sequence is that of (S)-beta-macrocarpene synthase from Zea mays (Maize).